The chain runs to 329 residues: G-protein coupled receptor 3 (329 aa).

The Extracellular segment spans residues 1 to 43 (MMWGAGRSMAWFSAGSGSVNVSIDPAEEPTGPATLLPSPRAWD). Asn20 carries an N-linked (GlcNAc...) asparagine glycan. A helical membrane pass occupies residues 44–64 (VVLCISGTLVSCENALVVAII). Residues 65–73 (VGTPAFRAP) are Cytoplasmic-facing. Residues 74 to 94 (MFLLVGSLAVADLLAGLGLVL) form a helical membrane-spanning segment. Topologically, residues 95-108 (HFAADFCIGSPEMS) are extracellular. A helical transmembrane segment spans residues 109-129 (LVLVGVLATAFTASIGSLLAI). The Cytoplasmic segment spans residues 130–153 (TVDRYLSLYNALTYYSETTVTRTY). A helical transmembrane segment spans residues 154 to 174 (VMLALVWVGALGLGLVPVLAW). At 175–192 (NCRDGLTTCGVVYPLSKN) the chain is on the extracellular side. Residues 193-213 (HLVVLAIVFFMVFGIMLQLYA) traverse the membrane as a helical segment. The Cytoplasmic portion of the chain corresponds to 214-247 (QICRIVCRHAQQIALQRHLLPASHYVATRKGIAT). Residues 248-268 (LAVVLGAFAACWLPFTVYCLL) form a helical membrane-spanning segment. The Extracellular portion of the chain corresponds to 269-277 (GDANSPPLY). A helical transmembrane segment spans residues 278 to 298 (TYLTLLPATYNSMINPVIYAF). At 299–329 (RNQDVQKVLWAICCCCSTSKIPFRSRSPSDV) the chain is on the cytoplasmic side. Residue Cys312 is the site of S-palmitoyl cysteine attachment. Ser323, Ser325, and Ser327 each carry phosphoserine.

It belongs to the G-protein coupled receptor 1 family. In terms of tissue distribution, abundantly expressed in granule neurons at all development stages. Enriched in the longest tips of neurites during differentiation of hippocampal neurons.

Its subcellular location is the cell membrane. In terms of biological role, constitutively active G-protein coupled receptor that maintains high 3'-5'-cyclic adenosine monophosphate (cAMP) levels that a plays a role in serveral processes including meiotic arrest in oocytes or neuronal development via activation of numerous intracellular signaling pathways. Acts as an essential activator of thermogenic adipocytes and drives thermogenesis via its intrinsic G(s)-coupling activity without the requirement of a ligand. Has a potential role in modulating a number of brain functions, including behavioral responses to stress, amyloid-beta peptide generation in neurons. Stimulates neurite outgrowth in cerebellar granular neurons modulated via PKA, ERK, and most strongly PI3K-mediated signaling pathways. This chain is G-protein coupled receptor 3 (Gpr3), found in Rattus norvegicus (Rat).